The chain runs to 547 residues: ATP synthase subunit alpha (547 aa).

Glycine 172 to threonine 179 lines the ATP pocket.

This sequence belongs to the ATPase alpha/beta chains family. As to quaternary structure, F-type ATPases have 2 components, CF(1) - the catalytic core - and CF(0) - the membrane proton channel. CF(1) has five subunits: alpha(3), beta(3), gamma(1), delta(1), epsilon(1). CF(0) has three main subunits: a(1), b(2) and c(9-12). The alpha and beta chains form an alternating ring which encloses part of the gamma chain. CF(1) is attached to CF(0) by a central stalk formed by the gamma and epsilon chains, while a peripheral stalk is formed by the delta and b chains.

It localises to the cell membrane. The enzyme catalyses ATP + H2O + 4 H(+)(in) = ADP + phosphate + 5 H(+)(out). Its function is as follows. Produces ATP from ADP in the presence of a proton gradient across the membrane. The alpha chain is a regulatory subunit. The protein is ATP synthase subunit alpha of Rhodococcus erythropolis (strain PR4 / NBRC 100887).